We begin with the raw amino-acid sequence, 253 residues long: Phosphoglycerate mutase 2 (253 aa).

T3 is modified (phosphothreonine). Substrate contacts are provided by residues 10–17, 23–24, R62, 89–92, K100, and 116–117; these read RHGESSWN, CG, ERHY, and RR. The Tele-phosphohistidine intermediate role is filled by H11. 2 positions are modified to phosphoserine: S14 and S15. E89 (proton donor/acceptor) is an active-site residue. S118 carries the post-translational modification Phosphoserine. At T121 the chain carries Phosphothreonine. Phosphotyrosine is present on residues Y132 and Y133. S135 carries the phosphoserine modification. T152 is modified (phosphothreonine). 187–188 contacts substrate; sequence GN.

Belongs to the phosphoglycerate mutase family. BPG-dependent PGAM subfamily. As to quaternary structure, homodimer. Interacts with ENO1.

It catalyses the reaction (2R)-2-phosphoglycerate = (2R)-3-phosphoglycerate. The catalysed reaction is (2R)-3-phospho-glyceroyl phosphate = (2R)-2,3-bisphosphoglycerate + H(+). Its function is as follows. Interconversion of 3- and 2-phosphoglycerate with 2,3-bisphosphoglycerate as the primer of the reaction. Can also catalyze the reaction of EC 5.4.2.4 (synthase), but with a reduced activity. This Rattus norvegicus (Rat) protein is Phosphoglycerate mutase 2 (Pgam2).